The primary structure comprises 513 residues: Protein phosphatase 1H (513 aa).

S7 carries the post-translational modification Phosphoserine. The PPM-type phosphatase domain occupies A77 to L506. Residues I110 to K133 form a disordered region. T113 carries the post-translational modification Phosphothreonine. S123 and S210 each carry phosphoserine. R212 carries the omega-N-methylarginine modification. S220 carries the phosphoserine modification. T223 bears the Phosphothreonine mark. S421 is subject to Phosphoserine.

Belongs to the PP2C family.

It is found in the nucleus. It localises to the cytoplasm. It carries out the reaction O-phospho-L-seryl-[protein] + H2O = L-seryl-[protein] + phosphate. The enzyme catalyses O-phospho-L-threonyl-[protein] + H2O = L-threonyl-[protein] + phosphate. Dephosphorylates CDKN1B at 'Thr-187', thus removing a signal for proteasomal degradation. The sequence is that of Protein phosphatase 1H (Ppm1h) from Rattus norvegicus (Rat).